A 331-amino-acid chain; its full sequence is Phosphate acyltransferase (331 aa).

Belongs to the PlsX family. In terms of assembly, homodimer. Probably interacts with PlsY.

The protein resides in the cytoplasm. It catalyses the reaction a fatty acyl-[ACP] + phosphate = an acyl phosphate + holo-[ACP]. The protein operates within lipid metabolism; phospholipid metabolism. In terms of biological role, catalyzes the reversible formation of acyl-phosphate (acyl-PO(4)) from acyl-[acyl-carrier-protein] (acyl-ACP). This enzyme utilizes acyl-ACP as fatty acyl donor, but not acyl-CoA. In Ureaplasma urealyticum serovar 10 (strain ATCC 33699 / Western), this protein is Phosphate acyltransferase.